The following is a 242-amino-acid chain: Probable transcriptional regulatory protein BURPS1710b_1385 (242 aa).

The protein belongs to the TACO1 family.

Its subcellular location is the cytoplasm. This is Probable transcriptional regulatory protein BURPS1710b_1385 from Burkholderia pseudomallei (strain 1710b).